A 197-amino-acid polypeptide reads, in one-letter code: Imidazoleglycerol-phosphate dehydratase (197 aa).

This sequence belongs to the imidazoleglycerol-phosphate dehydratase family.

The protein resides in the cytoplasm. The enzyme catalyses D-erythro-1-(imidazol-4-yl)glycerol 3-phosphate = 3-(imidazol-4-yl)-2-oxopropyl phosphate + H2O. It participates in amino-acid biosynthesis; L-histidine biosynthesis; L-histidine from 5-phospho-alpha-D-ribose 1-diphosphate: step 6/9. The sequence is that of Imidazoleglycerol-phosphate dehydratase from Cellvibrio japonicus (strain Ueda107) (Pseudomonas fluorescens subsp. cellulosa).